We begin with the raw amino-acid sequence, 205 residues long: Cytochrome c oxidase subunit 2 (205 aa).

6 residues coordinate Cu cation: H115, C150, E152, C154, H158, and M161. Residue E152 participates in Mg(2+) binding.

This sequence belongs to the cytochrome c oxidase subunit 2 family. In terms of assembly, component of the cytochrome c oxidase (complex IV, CIV), a multisubunit enzyme composed of a catalytic core of 3 subunits and several supernumerary subunits. The complex exists as a monomer or a dimer and forms supercomplexes (SCs) in the inner mitochondrial membrane with ubiquinol-cytochrome c oxidoreductase (cytochrome b-c1 complex, complex III, CIII). It depends on Cu cation as a cofactor.

Its subcellular location is the mitochondrion inner membrane. The catalysed reaction is 4 Fe(II)-[cytochrome c] + O2 + 8 H(+)(in) = 4 Fe(III)-[cytochrome c] + 2 H2O + 4 H(+)(out). Component of the cytochrome c oxidase, the last enzyme in the mitochondrial electron transport chain which drives oxidative phosphorylation. The respiratory chain contains 3 multisubunit complexes succinate dehydrogenase (complex II, CII), ubiquinol-cytochrome c oxidoreductase (cytochrome b-c1 complex, complex III, CIII) and cytochrome c oxidase (complex IV, CIV), that cooperate to transfer electrons derived from NADH and succinate to molecular oxygen, creating an electrochemical gradient over the inner membrane that drives transmembrane transport and the ATP synthase. Cytochrome c oxidase is the component of the respiratory chain that catalyzes the reduction of oxygen to water. Electrons originating from reduced cytochrome c in the intermembrane space (IMS) are transferred via the dinuclear copper A center (CU(A)) of subunit 2 and heme A of subunit 1 to the active site in subunit 1, a binuclear center (BNC) formed by heme A3 and copper B (CU(B)). The BNC reduces molecular oxygen to 2 water molecules using 4 electrons from cytochrome c in the IMS and 4 protons from the mitochondrial matrix. This Paramecium tetraurelia protein is Cytochrome c oxidase subunit 2 (COII).